The chain runs to 487 residues: Lysophospholipid acyltransferase 5 (487 aa).

Ala2 is subject to N-acetylalanine. Transmembrane regions (helical) follow at residues Leu44–Tyr64, Phe84–Leu104, Val111–Tyr131, and Gly180–Gly200. Asn225 carries N-linked (GlcNAc...) asparagine glycosylation. Transmembrane regions (helical) follow at residues Leu236 to Leu256 and Val285 to Phe305. Asn308 and Asn331 each carry an N-linked (GlcNAc...) asparagine glycan. Active-site residues include Asn338 and His374. A run of 3 helical transmembrane segments spans residues Gly364–Phe384, Leu422–Phe442, and Ser453–His473. The Di-lysine motif motif lies at Lys484–Glu487.

The protein belongs to the membrane-bound acyltransferase family. As to expression, detected ubiquitously, with high expression levels in small intestine, brown adipose tissue, liver, kidney and testis. Expressed in liver and both proximal and distal small intestine (at protein level). Expressed in peritoneal macrophages.

It localises to the endoplasmic reticulum membrane. It carries out the reaction a 1-acyl-sn-glycero-3-phosphocholine + an acyl-CoA = a 1,2-diacyl-sn-glycero-3-phosphocholine + CoA. The catalysed reaction is a 1-acyl-sn-glycero-3-phosphoethanolamine + an acyl-CoA = a 1,2-diacyl-sn-glycero-3-phosphoethanolamine + CoA. The enzyme catalyses a 1-acyl-sn-glycero-3-phospho-L-serine + an acyl-CoA = a 1,2-diacyl-sn-glycero-3-phospho-L-serine + CoA. It catalyses the reaction (9Z,12Z)-octadecadienoyl-CoA + a 1-acyl-sn-glycero-3-phosphocholine = 1-acyl-2-(9Z,12Z)-octadecadienoyl-sn-glycero-3-phosphocholine + CoA. It carries out the reaction (5Z,8Z,11Z,14Z)-eicosatetraenoyl-CoA + a 1-acyl-sn-glycero-3-phosphocholine = 1-acyl-2-(5Z,8Z,11Z,14Z-eicosatetraenoyl)-sn-glycero-3-phosphocholine + CoA. The catalysed reaction is dodecanoyl-CoA + 1-hexadecanoyl-sn-glycero-3-phosphocholine = 1-hexadecanoyl-2-dodecanoyl-sn-glycero-3-phosphocholine + CoA. The enzyme catalyses octadecanoyl-CoA + 1-hexadecanoyl-sn-glycero-3-phosphocholine = 1-hexadecanoyl-2-octadecanoyl-sn-glycero-3-phosphocholine + CoA. It catalyses the reaction 1-dodecanoyl-sn-glycero-3-phosphocholine + hexadecanoyl-CoA = 1-dodecanoyl-2-hexadecanoyl-sn-glycero-3-phosphocholine + CoA. It carries out the reaction 1-tetradecanoyl-sn-glycero-3-phosphocholine + hexadecanoyl-CoA = 1-tetradecanoyl-2-hexadecanoyl-sn-glycero-3-phosphocholine + CoA. The catalysed reaction is 1-hexadecanoyl-sn-glycero-3-phosphocholine + hexadecanoyl-CoA = 1,2-dihexadecanoyl-sn-glycero-3-phosphocholine + CoA. The enzyme catalyses 1-octadecanoyl-sn-glycero-3-phosphocholine + hexadecanoyl-CoA = 1-octadecanoyl-2-hexadecanoyl-sn-glycero-3-phosphocholine + CoA. It catalyses the reaction 1-(9Z-octadecenoyl)-sn-glycero-3-phosphocholine + hexadecanoyl-CoA = 1-(9Z-octadecenoyl)-2-hexadecanoyl-sn-glycero-3-phosphocholine + CoA. It carries out the reaction (9Z)-hexadecenoyl-CoA + 1-hexadecanoyl-sn-glycero-3-phosphocholine = 1-hexadecanoyl-2-(9Z-hexadecenoyl)-sn-glycero-3-phosphocholine + CoA. The catalysed reaction is 1-hexadecanoyl-sn-glycero-3-phosphocholine + (9Z)-octadecenoyl-CoA = 1-hexadecanoyl-2-(9Z-octadecenoyl)-sn-glycero-3-phosphocholine + CoA. The enzyme catalyses (9Z,12Z)-octadecadienoyl-CoA + 1-hexadecanoyl-sn-glycero-3-phosphocholine = 1-hexadecanoyl-2-(9Z,12Z-octadecadienoyl)-sn-glycero-3-phosphocholine + CoA. It catalyses the reaction 1-dodecanoyl-sn-glycero-3-phosphocholine + (5Z,8Z,11Z,14Z)-eicosatetraenoyl-CoA = 1-dodecanoyl-2-(5Z,8Z,11Z,14Z)-eicosatetraenoyl-sn-glycero-3-phosphocholine + CoA. It carries out the reaction (5Z,8Z,11Z,14Z)-eicosatetraenoyl-CoA + 1-hexadecanoyl-sn-glycero-3-phosphocholine = 1-hexadecanoyl-2-(5Z,8Z,11Z,14Z-eicosatetraenoyl)-sn-glycero-3-phosphocholine + CoA. The catalysed reaction is 1-octadecanoyl-sn-glycero-3-phosphocholine + (5Z,8Z,11Z,14Z)-eicosatetraenoyl-CoA = 1-octadecanoyl-2-(5Z,8Z,11Z,14Z-eicosatetraenoyl)-sn-glycero-3-phosphocholine + CoA. The enzyme catalyses 1-eicosanoyl-sn-glycero-3-phosphocholine + (5Z,8Z,11Z,14Z)-eicosatetraenoyl-CoA = 1-eicosanoyl-2-(5Z,8Z,11Z,14Z)-eicosatetraenoyl-sn-glycero-3-phosphocholine + CoA. It catalyses the reaction 1-(9Z-octadecenoyl)-sn-glycero-3-phosphocholine + (9Z)-octadecenoyl-CoA = 1,2-di-(9Z-octadecenoyl)-sn-glycero-3-phosphocholine + CoA. It carries out the reaction 1-(9Z-octadecenoyl)-sn-glycero-3-phosphocholine + (9Z,12Z)-octadecadienoyl-CoA = 1-(9Z)-octadecenoyl-2-(9Z,12Z)-octadecadienoyl-sn-glycero-3-phosphocholine + CoA. The catalysed reaction is 1-(9Z-octadecenoyl)-sn-glycero-3-phosphocholine + (5Z,8Z,11Z,14Z)-eicosatetraenoyl-CoA = 1-(9Z)-octadecenoyl-2-(5Z,8Z,11Z,14Z)-icosatetraenoyl-sn-glycero-3-phosphocholine + CoA. The enzyme catalyses a 1-acyl-sn-glycero-3-phosphoethanolamine + (9Z,12Z)-octadecadienoyl-CoA = 1-acyl-2-(9Z,12Z)-octadecadienoyl-sn-glycero-3-phosphoethanolamine + CoA. It catalyses the reaction 1-(9Z-octadecenoyl)-sn-glycero-3-phosphoethanolamine + (9Z,12Z)-octadecadienoyl-CoA = 1-(9Z)-octadecenoyl-2-(9Z,12Z)-octadecadienoyl-sn-glycero-3-phosphoethanolamine + CoA. It carries out the reaction 1-(10Z-heptadecenoyl)-sn-glycero-3-phosphoethanolamine + (9Z,12Z)-octadecadienoyl-CoA = 1-(10Z-heptadecenoyl)-2-(9Z,12Z-octadecadienoyl)-sn-glycero-3-phosphoethanolamine + CoA. The catalysed reaction is a 1-acyl-sn-glycero-3-phosphoethanolamine + (5Z,8Z,11Z,14Z)-eicosatetraenoyl-CoA = 1-acyl-2-(5Z,8Z,11Z,14Z)-eicosatetraenoyl-sn-glycero-3-phosphoethanolamine + CoA. The enzyme catalyses 1-hexadecanoyl-sn-glycero-3-phosphoethanolamine + (5Z,8Z,11Z,14Z)-eicosatetraenoyl-CoA = 1-hexadecanoyl-2-(5Z,8Z,11Z,14Z-eicosatetraenoyl)-sn-glycero-3-phosphoethanolamine + CoA. It catalyses the reaction 1-(9Z-octadecenoyl)-sn-glycero-3-phosphoethanolamine + (5Z,8Z,11Z,14Z)-eicosatetraenoyl-CoA = 1-(9Z)-octadecenoyl-2-(5Z,8Z,11Z,14Z)-eicosatetraenoyl-sn-glycero-3-phosphoethanolamine + CoA. It carries out the reaction 1-(10Z-heptadecenoyl)-sn-glycero-3-phosphoethanolamine + (5Z,8Z,11Z,14Z)-eicosatetraenoyl-CoA = 1-(10Z-heptadecenoyl)-2-(5Z,8Z,11Z,14Z-eicosatetraenoyl)-sn-glycero-3-phosphoethanolamine + CoA. The catalysed reaction is a 1-O-(1Z-alkenyl)-sn-glycero-3-phosphoethanolamine + (5Z,8Z,11Z,14Z)-eicosatetraenoyl-CoA = 1-O-(1Z)-alkenyl-2-(5Z,8Z,11Z,14Z)-eicosatetraenoyl-sn-glycero-3-phosphoethanolamine + CoA. The enzyme catalyses a 1-acyl-sn-glycero-3-phospho-L-serine + (9Z,12Z)-octadecadienoyl-CoA = 1-acyl-2-(9Z,12Z-octadecadienoyl)-sn-glycero-3-phospho-L-serine + CoA. It catalyses the reaction a 1-acyl-sn-glycero-3-phospho-L-serine + (5Z,8Z,11Z,14Z)-eicosatetraenoyl-CoA = 1-acyl-2-(5Z,8Z,11Z,14Z-eicosatetraenoyl)-sn-glycero-3-phospho-L-serine + CoA. It carries out the reaction 1-hexadecanoyl-sn-glycero-3-phospho-L-serine + (9Z)-octadecenoyl-CoA = 1-hexadecanoyl-2-(9Z-octadecenoyl)-sn-glycero-3-phospho-L-serine + CoA. The catalysed reaction is 1-(9Z-octadecenoyl)-sn-glycero-3-phospho-L-serine + (9Z)-octadecenoyl-CoA = 1,2-di-(9Z)-octadecenoyl-sn-glycero-3-phospho-L-serine + CoA. The enzyme catalyses 1-hexadecanoyl-sn-glycero-3-phospho-L-serine + (9Z,12Z)-octadecadienoyl-CoA = 1-hexadecanoyl-2-(9Z,12Z-octadecadienoyl)-sn-glycero-3-phospho-L-serine + CoA. It catalyses the reaction 1-(9Z-octadecenoyl)-sn-glycero-3-phospho-L-serine + (9Z,12Z)-octadecadienoyl-CoA = 1-(9Z-octadecenoyl)-2-(9Z,12Z-octadienoyl)-sn-glycero-3-phospho-L-serine + CoA. It carries out the reaction 1-hexadecanoyl-sn-glycero-3-phospho-L-serine + (5Z,8Z,11Z,14Z)-eicosatetraenoyl-CoA = 1-hexadecanoyl-2-(5Z,8Z,11Z,14Z-eicosatetraenoyl)-sn-glycero-3-phospho-L-serine + CoA. The catalysed reaction is 1-(9Z-octadecenoyl)-sn-glycero-3-phospho-L-serine + (5Z,8Z,11Z,14Z)-eicosatetraenoyl-CoA = 1-(9Z-octadecenoyl)-2-(5Z,8Z,11Z,14Z-eicosatetraenoyl)-sn-glycero-3-phospho-L-serine + CoA. It participates in lipid metabolism; phospholipid metabolism. Lysophospholipid O-acyltransferase (LPLAT) that catalyzes the reacylation step of the phospholipid remodeling process also known as the Lands cycle. Catalyzes transfer of the fatty acyl chain from fatty acyl-CoA to 1-acyl lysophospholipid to form various classes of phospholipids. Converts 1-acyl lysophosphatidylcholine (LPC) into phosphatidylcholine (PC) (LPCAT activity), 1-acyl lysophosphatidylserine (LPS) into phosphatidylserine (PS) (LPSAT activity) and 1-acyl lysophosphatidylethanolamine (LPE) into phosphatidylethanolamine (PE) (LPEAT activity). Favors polyunsaturated fatty acyl-CoAs as acyl donors compared to saturated fatty acyl-CoAs. Has higher activity for LPC acyl acceptors compared to LPEs and LPSs. Can also transfer the fatty acyl chain from fatty acyl-CoA to 1-O-alkyl lysophospholipid or 1-O-alkenyl lysophospholipid with lower efficiency. Acts as a major LPC O-acyltransferase in liver and intestine. As a component of the liver X receptor/NR1H3 or NR1H2 signaling pathway, mainly catalyzes the incorporation of arachidonate into PCs of endoplasmic reticulum (ER) membranes, increasing membrane dynamics and enabling triacylglycerols transfer to nascent very low-density lipoprotein (VLDL) particles. Promotes processing of sterol regulatory protein SREBF1 in hepatocytes, likely by facilitating the translocation of SREBF1-SCAP complex from ER to the Golgi apparatus. Participates in mechanisms by which the liver X receptor/NR1H3 or NR1H2 signaling pathway counteracts lipid-induced ER stress response and inflammation. Down-regulates hepatic inflammation by limiting arachidonic acid availability for synthesis of inflammatory eicosanoids, such as prostaglandins. In enterocytes, acts as a component of a gut-brain feedback loop that coordinates dietary lipid absorption and food intake. Regulates the abundance of PCs containing linoleate and arachidonate in enterocyte membranes, enabling passive diffusion of fatty acids and cholesterol across the membrane for efficient chylomicron assembly. In the intestinal crypt, acts as a component of dietary-responsive phospholipid-cholesterol axis, regulating the biosynthesis of cholesterol and its mitogenic effects on intestinal stem cells. The chain is Lysophospholipid acyltransferase 5 (Lpcat3) from Mus musculus (Mouse).